The following is a 62-amino-acid chain: Double zinc ribbon protein TK0111 (62 aa).

Zn(2+)-binding residues include C13, C16, C31, C34, C42, C45, C54, and C57.

In terms of assembly, crystallized in association with 70S ribosomes. Requires Zn(2+) as cofactor.

The protein is Double zinc ribbon protein TK0111 of Thermococcus kodakarensis (strain ATCC BAA-918 / JCM 12380 / KOD1) (Pyrococcus kodakaraensis (strain KOD1)).